The chain runs to 115 residues: NADH-ubiquinone oxidoreductase chain 3 (115 aa).

3 consecutive transmembrane segments (helical) span residues 4 to 24, 55 to 75, and 84 to 104; these read MLAM…AFWL, FFLV…LLPL, and MITT…GLSY.

The protein belongs to the complex I subunit 3 family. In terms of assembly, core subunit of respiratory chain NADH dehydrogenase (Complex I) which is composed of 45 different subunits. Interacts with TMEM186. Interacts with TMEM242.

It is found in the mitochondrion inner membrane. The enzyme catalyses a ubiquinone + NADH + 5 H(+)(in) = a ubiquinol + NAD(+) + 4 H(+)(out). Core subunit of the mitochondrial membrane respiratory chain NADH dehydrogenase (Complex I) which catalyzes electron transfer from NADH through the respiratory chain, using ubiquinone as an electron acceptor. Essential for the catalytic activity of complex I. This Reithrodon auritus (Bunny rat) protein is NADH-ubiquinone oxidoreductase chain 3.